Here is a 444-residue protein sequence, read N- to C-terminus: Bifunctional enolase 2/transcriptional activator (444 aa).

H163 and E172 together coordinate substrate. Residue E215 is the Proton donor of the active site. 3 residues coordinate Mg(2+): D250, E300, and D327. Substrate contacts are provided by E300 and D327. The active-site Proton acceptor is K352. Substrate-binding positions include 379–382 (SHRS) and K403.

It belongs to the enolase family. Homodimer. Mg(2+) serves as cofactor.

Its subcellular location is the cytoplasm. The protein localises to the cytosol. The protein resides in the nucleus. It is found in the mitochondrion outer membrane. It catalyses the reaction (2R)-2-phosphoglycerate = phosphoenolpyruvate + H2O. The protein operates within carbohydrate degradation; glycolysis; pyruvate from D-glyceraldehyde 3-phosphate: step 4/5. Functionally, multifunctional enzyme that acts as an enolase involved in the metabolism and as a positive regulator of cold-responsive gene transcription. Binds to the cis-element the gene promoter of STZ/ZAT10, a zinc finger transcriptional repressor. This chain is Bifunctional enolase 2/transcriptional activator (ENO2), found in Arabidopsis thaliana (Mouse-ear cress).